We begin with the raw amino-acid sequence, 378 residues long: Ribosomal RNA large subunit methyltransferase G (378 aa).

Belongs to the methyltransferase superfamily. RlmG family.

Its subcellular location is the cytoplasm. The enzyme catalyses guanosine(1835) in 23S rRNA + S-adenosyl-L-methionine = N(2)-methylguanosine(1835) in 23S rRNA + S-adenosyl-L-homocysteine + H(+). Specifically methylates the guanine in position 1835 (m2G1835) of 23S rRNA. This chain is Ribosomal RNA large subunit methyltransferase G, found in Salmonella newport (strain SL254).